Here is a 131-residue protein sequence, read N- to C-terminus: Phosphoribosyl-ATP pyrophosphatase 2 (131 aa).

Residues 105 to 131 form a disordered region; the sequence is RIGKPAAPHATRRPVIPQEARAVRKHR.

The protein belongs to the PRA-PH family.

The protein localises to the cytoplasm. It catalyses the reaction 1-(5-phospho-beta-D-ribosyl)-ATP + H2O = 1-(5-phospho-beta-D-ribosyl)-5'-AMP + diphosphate + H(+). It functions in the pathway amino-acid biosynthesis; L-histidine biosynthesis; L-histidine from 5-phospho-alpha-D-ribose 1-diphosphate: step 2/9. This is Phosphoribosyl-ATP pyrophosphatase 2 (hisE2) from Rhodopseudomonas palustris (strain ATCC BAA-98 / CGA009).